Here is a 568-residue protein sequence, read N- to C-terminus: 2-succinyl-5-enolpyruvyl-6-hydroxy-3-cyclohexene-1-carboxylate synthase (568 aa).

It belongs to the TPP enzyme family. MenD subfamily. As to quaternary structure, homodimer. The cofactor is Mg(2+). It depends on Mn(2+) as a cofactor. Requires thiamine diphosphate as cofactor.

It catalyses the reaction isochorismate + 2-oxoglutarate + H(+) = 5-enolpyruvoyl-6-hydroxy-2-succinyl-cyclohex-3-ene-1-carboxylate + CO2. It functions in the pathway quinol/quinone metabolism; 1,4-dihydroxy-2-naphthoate biosynthesis; 1,4-dihydroxy-2-naphthoate from chorismate: step 2/7. The protein operates within quinol/quinone metabolism; menaquinone biosynthesis. In terms of biological role, catalyzes the thiamine diphosphate-dependent decarboxylation of 2-oxoglutarate and the subsequent addition of the resulting succinic semialdehyde-thiamine pyrophosphate anion to isochorismate to yield 2-succinyl-5-enolpyruvyl-6-hydroxy-3-cyclohexene-1-carboxylate (SEPHCHC). The sequence is that of 2-succinyl-5-enolpyruvyl-6-hydroxy-3-cyclohexene-1-carboxylate synthase from Actinobacillus pleuropneumoniae serotype 5b (strain L20).